Here is a 171-residue protein sequence, read N- to C-terminus: Large ribosomal subunit protein uL10 (171 aa).

It belongs to the universal ribosomal protein uL10 family. In terms of assembly, part of the ribosomal stalk of the 50S ribosomal subunit. The N-terminus interacts with L11 and the large rRNA to form the base of the stalk. The C-terminus forms an elongated spine to which L12 dimers bind in a sequential fashion forming a multimeric L10(L12)X complex.

In terms of biological role, forms part of the ribosomal stalk, playing a central role in the interaction of the ribosome with GTP-bound translation factors. This is Large ribosomal subunit protein uL10 from Methylocella silvestris (strain DSM 15510 / CIP 108128 / LMG 27833 / NCIMB 13906 / BL2).